The following is a 628-amino-acid chain: Leucine-rich repeat and fibronectin type-III domain-containing protein 3 (628 aa).

A signal peptide spans 1 to 16 (MAILPLLLCLLPLAPA). Residues 17–539 (SSPPQSATPS…PHAPFLGGTM (523 aa)) lie on the Extracellular side of the membrane. Positions 19–59 (PPQSATPSPCPRRCRCQTQSLPLSVLCPGAGLLFVPPSLDR) constitute an LRRNT domain. 7 LRR repeats span residues 60-83 (RAAE…ANMT), 84-105 (GLLH…AFAD), 108-129 (ALRA…QLRG), 132-153 (NLRH…ALDD), 157-178 (TLED…ALGR), 181-202 (NVNT…AFSR), and 205-226 (KLAR…PLFS). A glycan (N-linked (GlcNAc...) asparagine) is linked at Asn-81. One can recognise an LRRCT domain in the interval 249–295 (NPLHCNCELVWLRRLAREDDLEACASPPALGGRYFWAVGEEEFVCEP). In terms of domain architecture, Ig-like spans 295-382 (PPVVTHRSPP…GEATAAVELT (88 aa)). A disulfide bond links Cys-317 and Cys-366. Residues Asn-339, Asn-348, and Asn-393 are each glycosylated (N-linked (GlcNAc...) asparagine). The tract at residues 382–430 (TVGPPPPPQLANSTSCDPPRDGDPDALTPPSAASASAKVADTGPPTDRG) is disordered. The segment covering 406-422 (DALTPPSAASASAKVAD) has biased composition (low complexity). The Fibronectin type-III domain maps to 425–523 (PPTDRGVQVT…GCARFSTEPA (99 aa)). The N-linked (GlcNAc...) asparagine glycan is linked to Asn-462. Residues 540–560 (IIALGGVIVASVLVFIFVLLM) traverse the membrane as a helical segment. Residues 561–628 (RYKVHGGQPP…WGPGHEPVGP (68 aa)) lie on the Cytoplasmic side of the membrane.

This sequence belongs to the LRFN family. As to quaternary structure, can form heteromeric complexes with LRFN1, LRFN2, LRFN4 and LRFN5. Able to form homomeric complexes across cell junctions, between adjacent cells. Does not interact with DLG4. In terms of processing, N-glycosylated.

It is found in the cell membrane. It localises to the cell projection. The protein localises to the axon. The protein resides in the dendrite. Its subcellular location is the synapse. It is found in the presynaptic cell membrane. It localises to the postsynaptic cell membrane. Its function is as follows. Cell adhesion molecule that mediates homophilic cell-cell adhesion in a Ca(2+)-independent manner. Promotes neurite outgrowth in hippocampal neurons. In Homo sapiens (Human), this protein is Leucine-rich repeat and fibronectin type-III domain-containing protein 3 (LRFN3).